The sequence spans 238 residues: uncharacterized protein (238 aa).

3 helical membrane passes run 75–95, 116–136, and 172–192; these read YAIF…HNFY, IVLI…FSLI, and IQGL…LEVI. The interval 200–238 is disordered; that stretch reads DVEMSSMRGQAITTEPASDNTMAEETDCNTSKDVESGSN. Residues 206 to 220 show a composition bias toward polar residues; sequence MRGQAITTEPASDNT. Positions 229–238 are enriched in basic and acidic residues; the sequence is TSKDVESGSN.

It is found in the membrane. This is an uncharacterized protein from Schizosaccharomyces pombe (strain 972 / ATCC 24843) (Fission yeast).